The chain runs to 901 residues: DNA mismatch repair protein MutS (901 aa).

Polar residues predominate over residues 1 to 12 (MKYSASTSTPKS). The interval 1-25 (MKYSASTSTPKSAQPKEEELENSLP) is disordered. 679–686 (GPNASGKS) is a binding site for ATP.

It belongs to the DNA mismatch repair MutS family.

Functionally, this protein is involved in the repair of mismatches in DNA. It is possible that it carries out the mismatch recognition step. This protein has a weak ATPase activity. The chain is DNA mismatch repair protein MutS from Trichodesmium erythraeum (strain IMS101).